A 477-amino-acid polypeptide reads, in one-letter code: uncharacterized protein (477 aa).

A helical transmembrane segment spans residues 107–129; it reads VNFWSLSMACASVLALLGLVYLI.

It localises to the membrane. This is an uncharacterized protein from Treponema pallidum (strain Nichols).